The following is a 37-amino-acid chain: Large ribosomal subunit protein bL36c (37 aa).

The protein belongs to the bacterial ribosomal protein bL36 family.

The protein localises to the plastid. It is found in the chloroplast. The chain is Large ribosomal subunit protein bL36c from Gracilaria tenuistipitata var. liui (Red alga).